A 147-amino-acid chain; its full sequence is Ubiquitin-like-conjugating enzyme ATG10 (147 aa).

The Glycyl thioester intermediate role is filled by C116.

It belongs to the ATG10 family. Forms homooligomers. Interacts with ATG10. Interacts with ATG7 and ATG12.

It is found in the preautophagosomal structure membrane. Functionally, E2-like enzyme required for the cytoplasm to vacuole transport (Cvt), autophagy and nucleophagy. Acts as an E2-like enzyme that catalyzes the conjugation of ATG12 to ATG5. ATG12 conjugation to ATG5 is required for proper localization of ATG8 to the preautophagosomal structure (PAS). Likely serves as an ATG5-recognition molecule. The polypeptide is Ubiquitin-like-conjugating enzyme ATG10 (Kluyveromyces marxianus (strain DMKU3-1042 / BCC 29191 / NBRC 104275) (Yeast)).